A 412-amino-acid chain; its full sequence is AT-rich interactive domain-containing protein 3C (412 aa).

Residues 1-23 are compositionally biased toward low complexity; it reads MEALQKQQAARLAQGVGPLAPAC. A disordered region spans residues 1 to 96; that stretch reads MEALQKQQAA…SSQPPGLHPH (96 aa). Residues 50–73 show a composition bias toward acidic residues; sequence AEEEEDAEEDEEKREEAGAEEEAA. Low complexity predominate over residues 78-87; the sequence is PGAQGPSSPS. Residues 113 to 205 enclose the ARID domain; the sequence is DPKRKEFLDD…YLYPYECETR (93 aa). 2 disordered regions span residues 232–278 and 388–412; these read TPLF…AHAC and PVPASQGPTNPAPPPSTGPPSSILP. Polar residues predominate over residues 259-272; sequence TQSSPGPAQGSTSG. The region spanning 304-389 is the REKLES domain; sequence LALGPTREKL…GVLFARRQPV (86 aa).

As to quaternary structure, interacts (via REKLES DOMAIN) with NPM1; the interaction mediates ARID3C nuclear shuttling.

Its subcellular location is the nucleus. Its function is as follows. Transcription factor involved in monocyte-to-macrophage differentiation. Forms a complex with NPM1 to translocate to the nucleus, acting as a transcription factor that promotes the expression of the genes involved in macrophage differentiation, such as STAT3, STAT1 and JUNB. This is AT-rich interactive domain-containing protein 3C from Homo sapiens (Human).